A 150-amino-acid chain; its full sequence is Leukotriene C4 synthase (150 aa).

Topologically, residues 1 to 6 (MKDEVA) are cytoplasmic. Residues 7–27 (LLASVTLLGVLLQAYFSLQVI) form a helical membrane-spanning segment. Over 28–48 (SARRAFRVSPPLTTGPPEFER) the chain is Lumenal. Arginine 30 contributes to the glutathione binding site. Arginine 31 serves as the catalytic Proton donor. A Phosphoserine modification is found at serine 36. The helical transmembrane segment at 49–69 (IYRAQVNCSEYFPLFLAMLWV) threads the bilayer. Glutathione-binding positions include 51-55 (RAQVN) and 58-59 (EY). Over 70 to 73 (AGIF) the chain is Cytoplasmic. A helical membrane pass occupies residues 74–94 (FHEGAAALCGLVYLFARLRYF). 93 to 97 (YFQGY) serves as a coordination point for glutathione. Residues 95 to 104 (QGYARSAQQR) are Lumenal-facing. Arginine 104 serves as the catalytic Proton acceptor. Residues 105–124 (LAPLYASARALWLLVALAAL) traverse the membrane as a helical segment. Topologically, residues 125 to 150 (GLLAHFLPAELRAALLGQLRKLLLRS) are cytoplasmic.

Belongs to the MAPEG family. As to quaternary structure, homotrimer. Interacts with ALOX5AP and ALOX5. In terms of processing, phosphorylation at Ser-36 by RPS6KB1 inhibits the leukotriene-C4 synthase activity.

The protein localises to the nucleus outer membrane. It localises to the endoplasmic reticulum membrane. The protein resides in the nucleus membrane. It catalyses the reaction leukotriene C4 = leukotriene A4 + glutathione. The enzyme catalyses (13S,14S)-epoxy-(4Z,7Z,9E,11E,16Z,19Z)-docosahexaenoate + glutathione = (13R)-S-glutathionyl-(14S)-hydroxy-(4Z,7Z,9E,11E,16Z,19Z)-docosahexaenoate. Its pathway is lipid metabolism; leukotriene C4 biosynthesis. Its activity is regulated as follows. Inhibited by MK886. In terms of biological role, catalyzes the conjugation of leukotriene A4 with reduced glutathione (GSH) to form leukotriene C4 with high specificity. Can also catalyze the transfer of a glutathionyl group from glutathione (GSH) to 13(S),14(S)-epoxy-docosahexaenoic acid to form maresin conjugate in tissue regeneration 1 (MCTR1), a bioactive lipid mediator that possess potent anti-inflammatory and proresolving actions. The protein is Leukotriene C4 synthase (LTC4S) of Bos taurus (Bovine).